The primary structure comprises 505 residues: Surface lipoprotein assembly modifier 2 (505 aa).

Positions 1-19 (MLYFRYGFLVVWCAAGVSA) are cleaved as a signal peptide. Residues 23–188 (ADAPAILDDK…RFRKKTEGLT (166 aa)) are N-terminal domain. The interval 189 to 505 (GWRFSGGISP…EVFVSADWRF (317 aa)) is C-terminal probable beta barrel. 14 beta stranded membrane passes run 190-200 (WRFSGGISPAV), 232-243 (LNYEIEAEKLTP), 248-258 (HYLLFRSNIGG), 273-283 (FGRAYLGWQYK), 287-297 (QTAGILPFYQV), 326-335 (VGVQLSHTYR), 340-350 (WQFSVALEHYR), 368-377 (GFYVSSAKRL), 381-391 (ATVFGGWQFVR), 411-420 (NGVYAGWAQE), 427-437 (LNSRVSASYAR), 456-465 (WNVSLALSHD), 472-482 (IVPALNYRFGR), and 495-505 (SEVFVSADWRF).

This sequence belongs to the Slam family.

The protein localises to the cell outer membrane. Required for correct export to the cell surface of cell outer membrane lipoprotein HpuA heterologously in E.coli (hpuA does not exist in N.meningitidis strain MC58). In Neisseria meningitidis serogroup B (strain ATCC BAA-335 / MC58), this protein is Surface lipoprotein assembly modifier 2.